Here is a 305-residue protein sequence, read N- to C-terminus: Glutaminase (305 aa).

The substrate site is built by S61, N113, E158, N165, Y189, Y241, and V259.

It belongs to the glutaminase family. In terms of assembly, homotetramer.

It catalyses the reaction L-glutamine + H2O = L-glutamate + NH4(+). This Alkaliphilus oremlandii (strain OhILAs) (Clostridium oremlandii (strain OhILAs)) protein is Glutaminase.